The sequence spans 356 residues: Popeye domain-containing protein 1 (356 aa).

Topologically, residues 1 to 48 (MNFTEPSPLAQSTVVGFLPELESLTPVPSNETSCENWREVHHLVFHAA) are extracellular. Asparagine 2 and asparagine 30 each carry an N-linked (GlcNAc...) asparagine glycan. The chain crosses the membrane as a helical span at residues 49-69 (NVCFAVGLLIPTTLHLHMILL). Position 70 (arginine 70) is a topological domain, cytoplasmic. The chain crosses the membrane as a helical span at residues 71-91 (VMLSIGCTLYVVWATLYRCAL). Residue aspartate 92 is a topological domain, extracellular. A helical membrane pass occupies residues 93 to 113 (MMIWNSVFLGINILHLSYLLY). The required for interaction with CAV3 stretch occupies residues 93-115 (MMIWNSVFLGINILHLSYLLYKK). Over 114 to 356 (KKRPVKIEKD…VPVSPAHQLP (243 aa)) the chain is Cytoplasmic. The tract at residues 136-186 (RVPPDLFRRLTGQFCVIQTLKRGQVYATEDKTSVDDRLSILLKGRMKVSYR) is required for interaction with KCNK2. A phosphoserine mark is found at serine 295 and serine 318. The segment covering 313-323 (SSSTASLPMSS) has biased composition (low complexity). Positions 313-356 (SSSTASLPMSSPQQRASPKMKPIEEGLEDDDEVFVPVSPAHQLP) are disordered.

This sequence belongs to the popeye family. As to quaternary structure, homodimer. Homodimerization requires the C-terminus cytoplasmic region. Interacts (via the C-terminus cytoplasmic tail) with TJP1. Interacts (via the C-terminus cytoplasmic tail) with ARHGEF25/GEFT (via the DH domain). Interacts (via the C-terminus cytoplasmic tail) with VAMP3. Interacts with KCNK2; the interaction enhances KCNK2 surface expression and is inhibited by cAMP. Interacts with CAV3. In terms of tissue distribution, strongly expressed in heart and skeletal muscle. Weakly expressed in brain, spleen, liver, kidney and lung.

It localises to the lateral cell membrane. Its subcellular location is the cell junction. The protein resides in the tight junction. The protein localises to the membrane. It is found in the cell membrane. It localises to the sarcolemma. Its subcellular location is the caveola. Its function is as follows. Cell adhesion molecule involved in the establishment and/or maintenance of cell integrity. Involved in the formation and regulation of the tight junction (TJ) paracellular permeability barrier in epithelial cells. Plays a role in VAMP3-mediated vesicular transport and recycling of different receptor molecules through its interaction with VAMP3. Plays a role in the regulation of cell shape and movement by modulating the Rho-family GTPase activity through its interaction with ARHGEF25/GEFT. Induces primordial adhesive contact and aggregation of epithelial cells in a Ca(2+)-independent manner. Important for skeletal muscle and heart development. Also involved in striated muscle regeneration and repair and in the regulation of cell spreading. Important for the maintenance of cardiac function. Plays a regulatory function in heart rate dynamics mediated, at least in part, through cAMP-binding and, probably, by increasing cell surface expression of the potassium channel KCNK2 and enhancing current density. Is a caveolae-associated protein important for the preservation of caveolae structural and functional integrity as well as for heart protection against ischemia injury. The chain is Popeye domain-containing protein 1 (Popdc1) from Rattus norvegicus (Rat).